A 169-amino-acid polypeptide reads, in one-letter code: Allophycocyanin subunit beta-18 (169 aa).

At asparagine 72 the chain carries N4-methylasparagine. Cysteine 82 contributes to the (2R,3E)-phycocyanobilin binding site.

This sequence belongs to the phycobiliprotein family. In terms of assembly, heterodimer of ApcE and this beta chain. Post-translationally, contains one covalently linked bilin chromophore. The chromophore is added by phycocyanobilin lyase CpcUS.

Its subcellular location is the cellular thylakoid membrane. In terms of biological role, a variant beta-allophycocyanin (AP) which forms a complex with ApcE, a phycobilisome terminal emitter that influences energy transfer to photosystem II. This is Allophycocyanin subunit beta-18 (apcF) from Picosynechococcus sp. (strain ATCC 27264 / PCC 7002 / PR-6) (Agmenellum quadruplicatum).